The chain runs to 398 residues: Acetate kinase (398 aa).

Asparagine 7 contacts Mg(2+). Residue lysine 14 participates in ATP binding. Residue arginine 91 coordinates substrate. The Proton donor/acceptor role is filled by aspartate 148. ATP is bound by residues 208 to 212 (HIGNG), 283 to 285 (DMR), and 331 to 335 (GVGEN). Glutamate 384 contributes to the Mg(2+) binding site.

Belongs to the acetokinase family. Homodimer. Mg(2+) serves as cofactor. It depends on Mn(2+) as a cofactor.

It localises to the cytoplasm. The catalysed reaction is acetate + ATP = acetyl phosphate + ADP. It participates in metabolic intermediate biosynthesis; acetyl-CoA biosynthesis; acetyl-CoA from acetate: step 1/2. Catalyzes the formation of acetyl phosphate from acetate and ATP. Can also catalyze the reverse reaction. This Bacteroides fragilis (strain ATCC 25285 / DSM 2151 / CCUG 4856 / JCM 11019 / LMG 10263 / NCTC 9343 / Onslow / VPI 2553 / EN-2) protein is Acetate kinase.